We begin with the raw amino-acid sequence, 359 residues long: MRVLGIETSCDETAAAIVERDDMGEGRILSNVVLSQIAEHEPYGGVVPEIAARAHVEALDRLVDRALNDAGLKLYEVDAVAATAGPGLIGGLIVGLMTAKALAMAAQKPFYAVNHLEGHALTARLTDGLPFPYLLLLVSGGHTQMVLVRGIGDYERLGTTIDDALGEAFDKTAKLLGLPYPGGPTVERMALQGDQKRFALPRPLKGEARLDFSFSGLKTAVRQTATELVPLTDQDVTDICASFQAAVADTLSDRVGRSLERFKTEFPDCATPSLVVAGGVAANKTLRAALENLCTRHGFAFIAPPLNLCTDNAAMIAWAGAERAATQAPDSLDIAPRSRWPLDEKSAPVFGTGRRGAKA.

Fe cation-binding residues include His115 and His119. Substrate-binding positions include 137–141 (LVSGG), Asp170, Gly183, and Asn283. Asp311 provides a ligand contact to Fe cation. A disordered region spans residues 328–359 (APDSLDIAPRSRWPLDEKSAPVFGTGRRGAKA).

The protein belongs to the KAE1 / TsaD family. Fe(2+) is required as a cofactor.

It is found in the cytoplasm. The enzyme catalyses L-threonylcarbamoyladenylate + adenosine(37) in tRNA = N(6)-L-threonylcarbamoyladenosine(37) in tRNA + AMP + H(+). Its function is as follows. Required for the formation of a threonylcarbamoyl group on adenosine at position 37 (t(6)A37) in tRNAs that read codons beginning with adenine. Is involved in the transfer of the threonylcarbamoyl moiety of threonylcarbamoyl-AMP (TC-AMP) to the N6 group of A37, together with TsaE and TsaB. TsaD likely plays a direct catalytic role in this reaction. The chain is tRNA N6-adenosine threonylcarbamoyltransferase from Brucella abortus (strain S19).